The primary structure comprises 209 residues: Outer-membrane lipoprotein LolB (209 aa).

A signal peptide spans 1-17 (MATVFSRALGALVLGVA). Residue Cys-18 is the site of N-palmitoyl cysteine attachment. Cys-18 carries the S-diacylglycerol cysteine lipid modification.

Belongs to the LolB family. As to quaternary structure, monomer.

It is found in the cell outer membrane. In terms of biological role, plays a critical role in the incorporation of lipoproteins in the outer membrane after they are released by the LolA protein. In Ralstonia nicotianae (strain ATCC BAA-1114 / GMI1000) (Ralstonia solanacearum), this protein is Outer-membrane lipoprotein LolB.